Here is a 1359-residue protein sequence, read N- to C-terminus: Regulatory-associated protein of TOR 2 (1359 aa).

Disordered stretches follow at residues 17-64 (SSAA…PQVA) and 782-819 (SDNS…QHSD). Positions 32 to 50 (HLVDDHLPVENGPDPRRDV) are enriched in basic and acidic residues. Residues 782-805 (SDNSATARDGRISTSSPIATNSIM) show a composition bias toward polar residues. The segment covering 806 to 819 (HGSPQSDDSSQHSD) has biased composition (low complexity). WD repeat units lie at residues 1041–1080 (RFEL…PVNT), 1087–1127 (SDRG…GGQK), 1139–1178 (RSAG…VNTI), 1181–1221 (TADS…RLVY), 1228–1269 (PRSE…EPYL), 1273–1312 (AHRG…LTII), and 1321–1359 (QRIG…YQVR).

This sequence belongs to the WD repeat RAPTOR family. The target of rapamycin complex 1 (TORC1) is composed of at least RAPTOR, LST8 and TOR.

Component of TORC1 complex, which is an essential cell growth regulator that controls plant development. Acts by recruiting substrates for TOR. Acts by activating transcription, protein synthesis and ribosome biogenesis, and inhibiting mRNA degradation and autophagy. This is Regulatory-associated protein of TOR 2 (RAPTOR2) from Oryza sativa subsp. japonica (Rice).